The sequence spans 348 residues: Phospho-2-dehydro-3-deoxyheptonate aldolase, Trp-sensitive (348 aa).

This sequence belongs to the class-I DAHP synthase family.

It carries out the reaction D-erythrose 4-phosphate + phosphoenolpyruvate + H2O = 7-phospho-2-dehydro-3-deoxy-D-arabino-heptonate + phosphate. Its pathway is metabolic intermediate biosynthesis; chorismate biosynthesis; chorismate from D-erythrose 4-phosphate and phosphoenolpyruvate: step 1/7. Stereospecific condensation of phosphoenolpyruvate (PEP) and D-erythrose-4-phosphate (E4P) giving rise to 3-deoxy-D-arabino-heptulosonate-7-phosphate (DAHP). The chain is Phospho-2-dehydro-3-deoxyheptonate aldolase, Trp-sensitive (aroH) from Escherichia coli O6:H1 (strain CFT073 / ATCC 700928 / UPEC).